Consider the following 66-residue polypeptide: Potassium channel toxin alpha-KTx (66 aa).

A signal peptide spans 1 to 21 (MNTKVVLIMLMITSVILVVEA). Cystine bridges form between Cys29–Cys49, Cys35–Cys59, Cys39–Cys61, and Cys44–Cys64.

It belongs to the short scorpion toxin superfamily. Potassium channel inhibitor family. Expressed by the venom gland.

Its subcellular location is the secreted. Functionally, blocks voltage-gated potassium channels. This chain is Potassium channel toxin alpha-KTx, found in Hoffmannihadrurus gertschi (Scorpion).